The following is a 487-amino-acid chain: Glutamyl-tRNA(Gln) amidotransferase subunit A (487 aa).

Residues K79 and S158 each act as charge relay system in the active site. S182 functions as the Acyl-ester intermediate in the catalytic mechanism.

This sequence belongs to the amidase family. GatA subfamily. As to quaternary structure, heterotrimer of A, B and C subunits.

It catalyses the reaction L-glutamyl-tRNA(Gln) + L-glutamine + ATP + H2O = L-glutaminyl-tRNA(Gln) + L-glutamate + ADP + phosphate + H(+). Allows the formation of correctly charged Gln-tRNA(Gln) through the transamidation of misacylated Glu-tRNA(Gln) in organisms which lack glutaminyl-tRNA synthetase. The reaction takes place in the presence of glutamine and ATP through an activated gamma-phospho-Glu-tRNA(Gln). The sequence is that of Glutamyl-tRNA(Gln) amidotransferase subunit A from Ehrlichia ruminantium (strain Gardel).